Consider the following 274-residue polypeptide: Kit ligand (274 aa).

The signal sequence occupies residues 1–25 (MKKTQTWIITCIYLQLLLFNPLVHT). The residue at position 26 (Q26) is a Pyrrolidone carboxylic acid. Residues 26 to 215 (QGICSNRVTD…SNSIEDSSLQ (190 aa)) are Extracellular-facing. Cystine bridges form between C29–C114 and C68–C164. N90, N145, and N196 each carry an N-linked (GlcNAc...) asparagine glycan. The helical transmembrane segment at 216-238 (WAAVALPAFFSLVIGFAFGAFYW) threads the bilayer. Residues 239-274 (KKKQPNLTRTVENRQINEEDNEISMLQEKEREFQEV) are Cytoplasmic-facing.

Belongs to the SCF family. As to quaternary structure, homodimer, non-covalently linked. A soluble form is produced by proteolytic processing of isoform 1 in the extracellular domain.

It is found in the cell membrane. Its subcellular location is the cytoplasm. It localises to the cytoskeleton. The protein localises to the cell projection. The protein resides in the lamellipodium. It is found in the filopodium. Its subcellular location is the secreted. In terms of biological role, stimulates the proliferation of mast cells. Able to augment the proliferation of both myeloid and lymphoid hematopoietic progenitors in bone marrow culture. Also mediates cell-cell adhesion. Acts synergistically with other cytokines, probably interleukins. The protein is Kit ligand (KITLG) of Bos taurus (Bovine).